A 153-amino-acid chain; its full sequence is Ubiquitin-conjugating enzyme E2 35 (153 aa).

Residues 5–151 (NLPRRIIKET…AKEWTRLYAS (147 aa)) enclose the UBC core domain. Cysteine 89 functions as the Glycyl thioester intermediate in the catalytic mechanism.

It belongs to the ubiquitin-conjugating enzyme family. As to quaternary structure, interacts with yeast and human Mms2, with the RING domain of RGLG2 and with UEV1A, UEV1B, UEV1C and UEV1D. In terms of tissue distribution, ubiquitously expressed at low level. Mainly expressed in the vasculature.

The enzyme catalyses S-ubiquitinyl-[E1 ubiquitin-activating enzyme]-L-cysteine + [E2 ubiquitin-conjugating enzyme]-L-cysteine = [E1 ubiquitin-activating enzyme]-L-cysteine + S-ubiquitinyl-[E2 ubiquitin-conjugating enzyme]-L-cysteine.. Its pathway is protein modification; protein ubiquitination. In terms of biological role, catalyzes the synthesis of non-canonical poly-ubiquitin chains that are linked through 'Lys-63'. This type of poly-ubiquitination does not lead to protein degradation by the proteasome. Mediates transcriptional activation of target genes. Required for postreplication repair of UV-damaged DNA and for adapting root developmental programs to suboptimal availability of iron. In Arabidopsis thaliana (Mouse-ear cress), this protein is Ubiquitin-conjugating enzyme E2 35 (UBC35).